The chain runs to 303 residues: MNGENLNLGTLVSETRNPATMTLDQLSTLEMMQVFNQEDRKVPEAIAQVLPAIAEAVDLATASLQAGGRLIYLGAGTSGRLGVLDASECPPTFGVPHGLVIGLIAGGPGALLKAVEGAEDDPALGEADLKALSLTATDMVIGLAASGRTPYVIGALRYARDVGCRTAAISCNPHSPIAQEAQVAISPVVGPEALTGSTRLKSGTAQKLVLNMISTGVMVKLGKVYQNLMVDVKATNVKLLDRACRIVVEATGADLDSARQALEQSDNDVKPAILMLLANIGVEAARERLKQHNGYLREALLGG.

The SIS domain occupies 60 to 223 (ATASLQAGGR…STGVMVKLGK (164 aa)). The Proton donor role is filled by E88. Residue E119 is part of the active site.

Belongs to the GCKR-like family. MurNAc-6-P etherase subfamily. As to quaternary structure, homodimer.

The catalysed reaction is N-acetyl-D-muramate 6-phosphate + H2O = N-acetyl-D-glucosamine 6-phosphate + (R)-lactate. The protein operates within amino-sugar metabolism; 1,6-anhydro-N-acetylmuramate degradation. Its pathway is amino-sugar metabolism; N-acetylmuramate degradation. It functions in the pathway cell wall biogenesis; peptidoglycan recycling. Functionally, specifically catalyzes the cleavage of the D-lactyl ether substituent of MurNAc 6-phosphate, producing GlcNAc 6-phosphate and D-lactate. Together with AnmK, is also required for the utilization of anhydro-N-acetylmuramic acid (anhMurNAc) either imported from the medium or derived from its own cell wall murein, and thus plays a role in cell wall recycling. The polypeptide is N-acetylmuramic acid 6-phosphate etherase (Pectobacterium atrosepticum (strain SCRI 1043 / ATCC BAA-672) (Erwinia carotovora subsp. atroseptica)).